The following is a 407-amino-acid chain: Peptide chain release factor subunit 1 (407 aa).

It belongs to the eukaryotic release factor 1 family. In terms of assembly, heterodimer of two subunits, one of which binds GTP.

Its subcellular location is the cytoplasm. In terms of biological role, directs the termination of nascent peptide synthesis (translation) in response to the termination codons UAA, UAG and UGA. In Archaeoglobus fulgidus (strain ATCC 49558 / DSM 4304 / JCM 9628 / NBRC 100126 / VC-16), this protein is Peptide chain release factor subunit 1 (prf1).